Here is a 494-residue protein sequence, read N- to C-terminus: Cobyric acid synthase (494 aa).

The GATase cobBQ-type domain occupies 248 to 444 (EIEIAIIKLP…LHGIFENDEW (197 aa)). C329 acts as the Nucleophile in catalysis. The active site involves H436.

It belongs to the CobB/CobQ family. CobQ subfamily.

The protein operates within cofactor biosynthesis; adenosylcobalamin biosynthesis. Catalyzes amidations at positions B, D, E, and G on adenosylcobyrinic A,C-diamide. NH(2) groups are provided by glutamine, and one molecule of ATP is hydrogenolyzed for each amidation. The protein is Cobyric acid synthase of Prochlorococcus marinus (strain NATL1A).